Here is a 240-residue protein sequence, read N- to C-terminus: MKNKLITFKNNNFTALVIYLENINFKYFKKFLLKKIQKSPIFFKNIPIALNIEKLAFNFNWINLKKFFFSIGLFLIGIFGCKKESVKLDILKSGLPILFKKKKTLLNFNKKKNFFNKNSNKNHYSSLFIKNQKSYLVNELIRSGQRIYAPNTDLIITNNVSPGAELIADGNIHIYGNMKGRALAGAHGDETRKIFCTKLSAELISIAGEYCTVDQIPIKFLENSVEISLVNKKIFIKYNH.

Belongs to the MinC family. In terms of assembly, interacts with MinD and FtsZ.

In terms of biological role, cell division inhibitor that blocks the formation of polar Z ring septums. Rapidly oscillates between the poles of the cell to destabilize FtsZ filaments that have formed before they mature into polar Z rings. Prevents FtsZ polymerization. In Buchnera aphidicola subsp. Cinara cedri (strain Cc), this protein is Probable septum site-determining protein MinC.